The chain runs to 116 residues: Large ribosomal subunit protein uL18 (116 aa).

The protein belongs to the universal ribosomal protein uL18 family. Part of the 50S ribosomal subunit; part of the 5S rRNA/L5/L18/L25 subcomplex. Contacts the 5S and 23S rRNAs.

In terms of biological role, this is one of the proteins that bind and probably mediate the attachment of the 5S RNA into the large ribosomal subunit, where it forms part of the central protuberance. This Caulobacter vibrioides (strain ATCC 19089 / CIP 103742 / CB 15) (Caulobacter crescentus) protein is Large ribosomal subunit protein uL18.